Reading from the N-terminus, the 697-residue chain is Serine/threonine-protein kinase tousled-like 2 (697 aa).

2 disordered regions span residues 25 to 159 and 288 to 316; these read VAKG…SQSE and KLLIKKKPPSASQTPPPNLEPNKRKSKSN. The span at 31–44 shows a compositional bias: polar residues; the sequence is HNESSNQSLCSVGS. Residues 46–61 show a composition bias toward basic and acidic residues; sequence SDKELETPEKKSNDQR. Positions 109-145 are enriched in polar residues; it reads SSPQHSLSNPPAAVQQGSPSSISSVNTDHSHTSTSHK. 2 coiled-coil regions span residues 265-294 and 336-373; these read AFQNLVKQQERVNGQREEIERQRKLLIKKK and KLRLGHLKKEEAEIQVELERLERVRNLHIRELKRIHNE. Positions 388 to 666 constitute a Protein kinase domain; it reads YLLLHLLGRG…VHQLASDPYL (279 aa). Residues 394 to 402 and lysine 417 contribute to the ATP site; that span reads LGRGGFSEV. The active-site Proton acceptor is aspartate 518.

The protein belongs to the protein kinase superfamily. Ser/Thr protein kinase family. In terms of assembly, monomer. May form homodimers; homodimerization may enhance autophosphoylation and enzymatic activity. Heterodimer with TLK1. The cofactor is Mg(2+). Phosphorylated. Autophosphorylated; phosphorylation promotes the assembly of higher order oligomers and enzymatic activity.

Its subcellular location is the nucleus. It is found in the nucleoplasm. The protein localises to the cytoplasm. It localises to the perinuclear region. The protein resides in the cytoskeleton. It catalyses the reaction L-seryl-[protein] + ATP = O-phospho-L-seryl-[protein] + ADP + H(+). It carries out the reaction L-threonyl-[protein] + ATP = O-phospho-L-threonyl-[protein] + ADP + H(+). Its function is as follows. Serine/threonine-protein kinase involved in the process of chromatin assembly and probably also DNA replication, transcription, repair, and chromosome segregation. Negative regulator of amino acid starvation-induced autophagy. The polypeptide is Serine/threonine-protein kinase tousled-like 2 (Danio rerio (Zebrafish)).